A 514-amino-acid polypeptide reads, in one-letter code: Light-independent protochlorophyllide reductase subunit B (514 aa).

Asp-36 provides a ligand contact to [4Fe-4S] cluster. The active-site Proton donor is the Asp-300. Substrate is bound at residue 435 to 436 (GM).

This sequence belongs to the ChlB/BchB/BchZ family. Protochlorophyllide reductase is composed of three subunits; ChlL, ChlN and ChlB. Forms a heterotetramer of two ChlB and two ChlN subunits. [4Fe-4S] cluster serves as cofactor.

It is found in the plastid. Its subcellular location is the chloroplast. It carries out the reaction chlorophyllide a + oxidized 2[4Fe-4S]-[ferredoxin] + 2 ADP + 2 phosphate = protochlorophyllide a + reduced 2[4Fe-4S]-[ferredoxin] + 2 ATP + 2 H2O. Its pathway is porphyrin-containing compound metabolism; chlorophyll biosynthesis (light-independent). Component of the dark-operative protochlorophyllide reductase (DPOR) that uses Mg-ATP and reduced ferredoxin to reduce ring D of protochlorophyllide (Pchlide) to form chlorophyllide a (Chlide). This reaction is light-independent. The NB-protein (ChlN-ChlB) is the catalytic component of the complex. The polypeptide is Light-independent protochlorophyllide reductase subunit B (Pleurastrum terricola (Filamentous green alga)).